The chain runs to 578 residues: Avenacosidase 2 (578 aa).

Residues 1–57 (MALLCSALSNSTHPSFRSHIAGANSENLWHLSAHPAQKSKRRCNLTLSSRAAARISS) constitute a chloroplast transit peptide. Residues Gln-89, His-193, and 238–239 (NE) each bind a beta-D-glucoside. Glu-239 functions as the Proton donor in the catalytic mechanism. A disulfide bridge connects residues Cys-258 and Cys-264. Residues Tyr-381, Glu-454, Trp-504, 511-512 (EW), and Phe-520 contribute to the a beta-D-glucoside site. Glu-454 (nucleophile) is an active-site residue.

Belongs to the glycosyl hydrolase 1 family. Heteromultimer with P60A in a 1:1 stoichiometry. Aggregates to form the fibrillar stromacentre.

It localises to the plastid. The protein resides in the chloroplast stroma. It carries out the reaction avenacoside B + H2O = 26-desgluco-avenacoside B + D-glucose. Functionally, beta-glucosidase acting as a preformed defense system. Hydrolyzes the bisdesmosides avenacosides A and B to 26-desgluco-avenacosides exhibiting fungicidal activity. Can use beta-fucoside &gt; beta-glucoside &gt; beta-galactoside &gt; beta-xyloside as substrates, but not alpha-glycosides, beta-thioglucosides and disaccharides. This Avena sativa (Oat) protein is Avenacosidase 2 (P60B).